A 92-amino-acid polypeptide reads, in one-letter code: Costars family protein ST45-2 (92 aa).

Position 1 is an N-acetylmethionine (Met-1).

Belongs to the costars family.

This is Costars family protein ST45-2 from Eutrema halophilum (Salt cress).